Reading from the N-terminus, the 281-residue chain is Putrescine transport system permease protein PotI (281 aa).

Residues 1–13 lie on the Cytoplasmic side of the membrane; that stretch reads MNNLPVVRSPWRI. The chain crosses the membrane as a helical span at residues 14 to 33; it reads VILLLGFTFLYAPMLMLVIY. Topologically, residues 34 to 68 are periplasmic; sequence SFNSSKLVTVWAGWSTRWYGELLRDDAMMSAVGLS. The ABC transmembrane type-1 domain occupies 65 to 260; sequence VGLSLTIAAC…GAVGIVGFIA (196 aa). Residues 69–88 form a helical membrane-spanning segment; the sequence is LTIAACAATAAAILGTIAAV. Over 89-115 the chain is Cytoplasmic; that stretch reads VLVRFGRFRGSNGFAFMITAPLVMPDV. Residues 116–135 traverse the membrane as a helical segment; sequence ITGLSLLLLFVALAHAIGWP. Residues 136–140 are Periplasmic-facing; sequence ADRGM. Residues 141–160 form a helical membrane-spanning segment; the sequence is LTIWLAHVTFCTAYVAVVIS. Residues 161–186 lie on the Cytoplasmic side of the membrane; it reads SRLRELDRSIEEAAMDLGATPLKVFF. A helical transmembrane segment spans residues 187–206; that stretch reads VITLPMIMPAIISGWLLAFT. The Periplasmic segment spans residues 207 to 243; the sequence is LSLDDLVIASFVSGPGATTLPMLVFSSVRMGVNPEIN. Residues 244-263 traverse the membrane as a helical segment; it reads ALATLILGAVGIVGFIAWYL. Residues 264–281 are Cytoplasmic-facing; that stretch reads MARAEKQRIRDIQRARRG.

Belongs to the binding-protein-dependent transport system permease family. CysTW subfamily. The complex is composed of two ATP-binding proteins (PotG), two transmembrane proteins (PotH and PotI) and a solute-binding protein (PotF).

Its subcellular location is the cell inner membrane. In terms of biological role, part of the ABC transporter complex PotFGHI involved in putrescine uptake. Responsible for the translocation of the substrate across the membrane. This Escherichia coli O6:H1 (strain CFT073 / ATCC 700928 / UPEC) protein is Putrescine transport system permease protein PotI.